The chain runs to 132 residues: Fertilization-influencing membrane protein (132 aa).

Residues 100-120 traverse the membrane as a helical segment; it reads PGLFHHILVGLLVVAFFFLLF.

Testis-specific.

It is found in the cell membrane. Functionally, may play a role in sperm-oocyte fusion during fertilization. The chain is Fertilization-influencing membrane protein from Homo sapiens (Human).